A 349-amino-acid polypeptide reads, in one-letter code: Transmembrane protein 59-like (349 aa).

A signal peptide spans 1 to 22 (MDSVALMPLLLLLLLQPPPATP). Residue asparagine 100 is glycosylated (N-linked (GlcNAc...) asparagine). The helical transmembrane segment at 276 to 296 (ILACCLFLSVLVMLWLSCSTL) threads the bilayer. The Microbody targeting signal motif lies at 347–349 (TKL).

Belongs to the TMEM59 family.

It localises to the golgi apparatus membrane. Its function is as follows. Modulates the O-glycosylation and complex N-glycosylation steps occurring during the Golgi maturation of APP. Inhibits APP transport to the cell surface and further shedding. This chain is Transmembrane protein 59-like (TMEM59L), found in Bos taurus (Bovine).